The following is a 419-amino-acid chain: UDP-N-acetylglucosamine 1-carboxyvinyltransferase 2 (419 aa).

22-23 (KN) contributes to the phosphoenolpyruvate binding site. A UDP-N-acetyl-alpha-D-glucosamine-binding site is contributed by arginine 92. The Proton donor role is filled by cysteine 116. Cysteine 116 bears the 2-(S-cysteinyl)pyruvic acid O-phosphothioketal mark. UDP-N-acetyl-alpha-D-glucosamine-binding positions include 121–125 (RPIDL), aspartate 306, and isoleucine 328.

It belongs to the EPSP synthase family. MurA subfamily.

It localises to the cytoplasm. The catalysed reaction is phosphoenolpyruvate + UDP-N-acetyl-alpha-D-glucosamine = UDP-N-acetyl-3-O-(1-carboxyvinyl)-alpha-D-glucosamine + phosphate. It participates in cell wall biogenesis; peptidoglycan biosynthesis. Its function is as follows. Cell wall formation. Adds enolpyruvyl to UDP-N-acetylglucosamine. This is UDP-N-acetylglucosamine 1-carboxyvinyltransferase 2 from Streptococcus pneumoniae (strain ATCC BAA-255 / R6).